Reading from the N-terminus, the 239-residue chain is Serine protease SplF (239 aa).

A signal peptide spans 1-36; the sequence is MNKNIIIKSIGALTILTSITGVGTTMVEGIQQTAKA. Catalysis depends on charge relay system residues histidine 75, aspartate 114, and serine 192.

The protein belongs to the peptidase S1B family.

The protein resides in the secreted. In Staphylococcus aureus (strain USA300), this protein is Serine protease SplF (splF).